We begin with the raw amino-acid sequence, 320 residues long: Phosphatidylserine decarboxylase proenzyme (320 aa).

Catalysis depends on charge relay system; for autoendoproteolytic cleavage activity residues Asp90, His147, and Ser254. Ser254 (schiff-base intermediate with substrate; via pyruvic acid; for decarboxylase activity) is an active-site residue. Pyruvic acid (Ser); by autocatalysis is present on Ser254. Residues 288–320 (EASTAAEPAPLPEEEIRAEHRASPLVDDTQDQG) form a disordered region.

The protein belongs to the phosphatidylserine decarboxylase family. PSD-B subfamily. Prokaryotic type I sub-subfamily. In terms of assembly, heterodimer of a large membrane-associated beta subunit and a small pyruvoyl-containing alpha subunit. It depends on pyruvate as a cofactor. In terms of processing, is synthesized initially as an inactive proenzyme. Formation of the active enzyme involves a self-maturation process in which the active site pyruvoyl group is generated from an internal serine residue via an autocatalytic post-translational modification. Two non-identical subunits are generated from the proenzyme in this reaction, and the pyruvate is formed at the N-terminus of the alpha chain, which is derived from the carboxyl end of the proenzyme. The autoendoproteolytic cleavage occurs by a canonical serine protease mechanism, in which the side chain hydroxyl group of the serine supplies its oxygen atom to form the C-terminus of the beta chain, while the remainder of the serine residue undergoes an oxidative deamination to produce ammonia and the pyruvoyl prosthetic group on the alpha chain. During this reaction, the Ser that is part of the protease active site of the proenzyme becomes the pyruvoyl prosthetic group, which constitutes an essential element of the active site of the mature decarboxylase.

The protein resides in the cell membrane. It catalyses the reaction a 1,2-diacyl-sn-glycero-3-phospho-L-serine + H(+) = a 1,2-diacyl-sn-glycero-3-phosphoethanolamine + CO2. It functions in the pathway phospholipid metabolism; phosphatidylethanolamine biosynthesis; phosphatidylethanolamine from CDP-diacylglycerol: step 2/2. Catalyzes the formation of phosphatidylethanolamine (PtdEtn) from phosphatidylserine (PtdSer). The protein is Phosphatidylserine decarboxylase proenzyme of Klebsiella pneumoniae (strain 342).